We begin with the raw amino-acid sequence, 485 residues long: Peroxisomal catalase (485 aa).

Residues His-53 and Asn-126 contribute to the active site. Residue Tyr-336 participates in heme binding.

The protein belongs to the catalase family. As to quaternary structure, homotetramer. It depends on heme as a cofactor.

The protein localises to the peroxisome matrix. The catalysed reaction is 2 H2O2 = O2 + 2 H2O. In terms of biological role, catalyzes the degradation of hydrogen peroxide (H(2)O(2)) generated by peroxisomal oxidases to water and oxygen, thereby protecting cells from the toxic effects of hydrogen peroxide. This Candida tropicalis (Yeast) protein is Peroxisomal catalase (POX9).